The sequence spans 164 residues: Proline-rich protein 2 (164 aa).

An N-terminal signal peptide occupies residues 1-21 (MNLKVGIAVLIIALIVPSAQP).

Component of the acid-soluble organic matrix of calcified layers of the shell (at protein level).

It localises to the secreted. The sequence is that of Proline-rich protein 2 from Lottia gigantea (Giant owl limpet).